We begin with the raw amino-acid sequence, 122 residues long: Holo-[acyl-carrier-protein] synthase (122 aa).

Mg(2+) contacts are provided by Asp8 and Glu55.

Belongs to the P-Pant transferase superfamily. AcpS family. Mg(2+) serves as cofactor.

The protein resides in the cytoplasm. The catalysed reaction is apo-[ACP] + CoA = holo-[ACP] + adenosine 3',5'-bisphosphate + H(+). Functionally, transfers the 4'-phosphopantetheine moiety from coenzyme A to a Ser of acyl-carrier-protein. This Fusobacterium nucleatum subsp. nucleatum (strain ATCC 25586 / DSM 15643 / BCRC 10681 / CIP 101130 / JCM 8532 / KCTC 2640 / LMG 13131 / VPI 4355) protein is Holo-[acyl-carrier-protein] synthase.